Here is a 327-residue protein sequence, read N- to C-terminus: DNA-directed RNA polymerase subunit alpha (327 aa).

The segment at 1–233 is alpha N-terminal domain (alpha-NTD); the sequence is MQNSASEFLK…DQLSIFADLQ (233 aa). An alpha C-terminal domain (alpha-CTD) region spans residues 247-327; the sequence is IDPILLRPVD…NWPPAGLEKP (81 aa).

It belongs to the RNA polymerase alpha chain family. Homodimer. The RNAP catalytic core consists of 2 alpha, 1 beta, 1 beta' and 1 omega subunit. When a sigma factor is associated with the core the holoenzyme is formed, which can initiate transcription.

The catalysed reaction is RNA(n) + a ribonucleoside 5'-triphosphate = RNA(n+1) + diphosphate. DNA-dependent RNA polymerase catalyzes the transcription of DNA into RNA using the four ribonucleoside triphosphates as substrates. The polypeptide is DNA-directed RNA polymerase subunit alpha (Chromobacterium violaceum (strain ATCC 12472 / DSM 30191 / JCM 1249 / CCUG 213 / NBRC 12614 / NCIMB 9131 / NCTC 9757 / MK)).